Here is a 415-residue protein sequence, read N- to C-terminus: uncharacterized protein (415 aa).

Helical transmembrane passes span 20 to 40, 43 to 63, 78 to 98, 109 to 129, 155 to 175, 243 to 263, 300 to 320, 328 to 348, 360 to 380, and 388 to 408; these read MAYLFYFITAFLLGTEAFGIL, LMPIADTLTIFFSSGIPPAIA, IPILYLMILLSVVGFILTPYI, LPNILYFAVGLCVVASTVIAF, VILVFILTLYLGIFGSLLSIS, IVIMSIMGGFWSGIYGYSSLI, IFSSIFVIGCLFFPEIPLIAF, GILCLRILAISSLFMSYYTLI, ISFYIILFGLVLNIILNLILV, and GSLATLITSISVFLIGVFAIL.

The protein belongs to the polysaccharide synthase family.

Its subcellular location is the cell membrane. This is an uncharacterized protein from Methanocaldococcus jannaschii (strain ATCC 43067 / DSM 2661 / JAL-1 / JCM 10045 / NBRC 100440) (Methanococcus jannaschii).